The sequence spans 503 residues: Maturase K (503 aa).

It belongs to the intron maturase 2 family. MatK subfamily.

Its subcellular location is the plastid. It is found in the chloroplast. Functionally, usually encoded in the trnK tRNA gene intron. Probably assists in splicing its own and other chloroplast group II introns. This is Maturase K from Diospyros kaki (Kaki persimmon).